Consider the following 82-residue polypeptide: Exodeoxyribonuclease 7 small subunit (82 aa).

The protein belongs to the XseB family. In terms of assembly, heterooligomer composed of large and small subunits.

It is found in the cytoplasm. It catalyses the reaction Exonucleolytic cleavage in either 5'- to 3'- or 3'- to 5'-direction to yield nucleoside 5'-phosphates.. Bidirectionally degrades single-stranded DNA into large acid-insoluble oligonucleotides, which are then degraded further into small acid-soluble oligonucleotides. The chain is Exodeoxyribonuclease 7 small subunit from Pectobacterium carotovorum subsp. carotovorum (strain PC1).